Consider the following 572-residue polypeptide: Asparagine--tRNA ligase, cytoplasmic 1 (572 aa).

A2 is modified (N-acetylalanine). A DNA-binding region (OB) is located at residues 53 to 131; it reads VRIGGWVKSG…QQIELNVVKV (79 aa). In terms of domain architecture, WHEP-TRS spans 236–292; that stretch reads DVEAARLIVIERGNVVAELKAAKASKEAITAAVAELKIAKETFAHIDERSRLRPGLP.

It belongs to the class-II aminoacyl-tRNA synthetase family.

It localises to the cytoplasm. The protein localises to the cytosol. It catalyses the reaction tRNA(Asn) + L-asparagine + ATP = L-asparaginyl-tRNA(Asn) + AMP + diphosphate + H(+). The sequence is that of Asparagine--tRNA ligase, cytoplasmic 1 from Arabidopsis thaliana (Mouse-ear cress).